Consider the following 87-residue polypeptide: Small ribosomal subunit protein uS15c (87 aa).

The protein belongs to the universal ribosomal protein uS15 family. As to quaternary structure, part of the 30S ribosomal subunit.

It localises to the plastid. The protein localises to the chloroplast. This is Small ribosomal subunit protein uS15c (rps15) from Nymphaea alba (White water-lily).